The primary structure comprises 351 residues: DNA polymerase IV (351 aa).

The UmuC domain maps to Ile-4 to Gly-185. Asp-8 and Asp-103 together coordinate Mg(2+). Glu-104 is an active-site residue.

Belongs to the DNA polymerase type-Y family. As to quaternary structure, monomer. Requires Mg(2+) as cofactor.

It localises to the cytoplasm. The enzyme catalyses DNA(n) + a 2'-deoxyribonucleoside 5'-triphosphate = DNA(n+1) + diphosphate. Functionally, poorly processive, error-prone DNA polymerase involved in untargeted mutagenesis. Copies undamaged DNA at stalled replication forks, which arise in vivo from mismatched or misaligned primer ends. These misaligned primers can be extended by PolIV. Exhibits no 3'-5' exonuclease (proofreading) activity. May be involved in translesional synthesis, in conjunction with the beta clamp from PolIII. The sequence is that of DNA polymerase IV from Shigella dysenteriae serotype 1 (strain Sd197).